The following is a 161-amino-acid chain: Nucleotide-binding protein RSc2549 (161 aa).

Belongs to the YajQ family.

Nucleotide-binding protein. The protein is Nucleotide-binding protein RSc2549 of Ralstonia nicotianae (strain ATCC BAA-1114 / GMI1000) (Ralstonia solanacearum).